A 59-amino-acid polypeptide reads, in one-letter code: Photosystem II reaction center protein K (59 aa).

The propeptide occupies 1–22 (MLNIFSLIGLNSALYSSSCFFA). A helical transmembrane segment spans residues 30-50 (FLSPIVDFMPVIPLLFFLLAF).

It belongs to the PsbK family. As to quaternary structure, PSII is composed of 1 copy each of membrane proteins PsbA, PsbB, PsbC, PsbD, PsbE, PsbF, PsbH, PsbI, PsbJ, PsbK, PsbL, PsbM, PsbT, PsbX, PsbY, PsbZ, Psb30/Ycf12, at least 3 peripheral proteins of the oxygen-evolving complex and a large number of cofactors. It forms dimeric complexes.

The protein localises to the plastid. The protein resides in the chloroplast thylakoid membrane. One of the components of the core complex of photosystem II (PSII). PSII is a light-driven water:plastoquinone oxidoreductase that uses light energy to abstract electrons from H(2)O, generating O(2) and a proton gradient subsequently used for ATP formation. It consists of a core antenna complex that captures photons, and an electron transfer chain that converts photonic excitation into a charge separation. This is Photosystem II reaction center protein K from Silene latifolia (White campion).